Reading from the N-terminus, the 207-residue chain is Large ribosomal subunit protein uL4 (207 aa).

A disordered region spans residues 59–78; that stretch reads GSGKKPFKQKGTGQARQGCK.

It belongs to the universal ribosomal protein uL4 family. As to quaternary structure, part of the 50S ribosomal subunit.

In terms of biological role, one of the primary rRNA binding proteins, this protein initially binds near the 5'-end of the 23S rRNA. It is important during the early stages of 50S assembly. It makes multiple contacts with different domains of the 23S rRNA in the assembled 50S subunit and ribosome. Its function is as follows. Forms part of the polypeptide exit tunnel. The polypeptide is Large ribosomal subunit protein uL4 (Geotalea daltonii (strain DSM 22248 / JCM 15807 / FRC-32) (Geobacter daltonii)).